We begin with the raw amino-acid sequence, 717 residues long: Polyribonucleotide nucleotidyltransferase (717 aa).

Mg(2+)-binding residues include Asp-496 and Asp-502. In terms of domain architecture, KH spans 563-622 (PRLLTIKIDPDLIGLVIGPGGKTVKGITEQTGTKIDIDDDGTVTISSTDGEQAEKAKRLI). The region spanning 632–700 (GEVYLGRVTR…SKGRLNLTRL (69 aa)) is the S1 motif domain.

The protein belongs to the polyribonucleotide nucleotidyltransferase family. Requires Mg(2+) as cofactor.

The protein localises to the cytoplasm. It carries out the reaction RNA(n+1) + phosphate = RNA(n) + a ribonucleoside 5'-diphosphate. In terms of biological role, involved in mRNA degradation. Catalyzes the phosphorolysis of single-stranded polyribonucleotides processively in the 3'- to 5'-direction. This chain is Polyribonucleotide nucleotidyltransferase, found in Microcystis aeruginosa (strain NIES-843 / IAM M-2473).